The chain runs to 468 residues: UDP-N-acetylmuramoyl-L-alanine--L-glutamate ligase (468 aa).

122-128 contacts ATP; it reads GTKGKST.

It belongs to the MurCDEF family. MurD2 subfamily.

It is found in the cytoplasm. The enzyme catalyses UDP-N-acetyl-alpha-D-muramoyl-L-alanine + L-glutamate + ATP = UDP-N-acetyl-alpha-D-muramoyl-L-alanyl-L-glutamate + ADP + phosphate + H(+). Its pathway is cell wall biogenesis; peptidoglycan biosynthesis. Cell wall formation. Catalyzes the addition of L-glutamate to the nucleotide precursor UDP-N-acetylmuramoyl-L-alanine. This Xanthomonas euvesicatoria pv. vesicatoria (strain 85-10) (Xanthomonas campestris pv. vesicatoria) protein is UDP-N-acetylmuramoyl-L-alanine--L-glutamate ligase.